The primary structure comprises 398 residues: Exodeoxyribonuclease 7 large subunit (398 aa).

This sequence belongs to the XseA family. Heterooligomer composed of large and small subunits.

Its subcellular location is the cytoplasm. It carries out the reaction Exonucleolytic cleavage in either 5'- to 3'- or 3'- to 5'-direction to yield nucleoside 5'-phosphates.. In terms of biological role, bidirectionally degrades single-stranded DNA into large acid-insoluble oligonucleotides, which are then degraded further into small acid-soluble oligonucleotides. The sequence is that of Exodeoxyribonuclease 7 large subunit from Anaplasma phagocytophilum (strain HZ).